The chain runs to 339 residues: Undecaprenyl-phosphate 4-deoxy-4-formamido-L-arabinose transferase (339 aa).

Helical transmembrane passes span 235 to 255 (LSLVGGGMALAGFLFALFLLV) and 269 to 289 (LFVLFAVLFMFSGVQLLGMGL).

It belongs to the glycosyltransferase 2 family.

It localises to the cell inner membrane. The catalysed reaction is UDP-4-deoxy-4-formamido-beta-L-arabinose + di-trans,octa-cis-undecaprenyl phosphate = 4-deoxy-4-formamido-alpha-L-arabinopyranosyl di-trans,octa-cis-undecaprenyl phosphate + UDP. Its pathway is glycolipid biosynthesis; 4-amino-4-deoxy-alpha-L-arabinose undecaprenyl phosphate biosynthesis; 4-amino-4-deoxy-alpha-L-arabinose undecaprenyl phosphate from UDP-4-deoxy-4-formamido-beta-L-arabinose and undecaprenyl phosphate: step 1/2. It functions in the pathway bacterial outer membrane biogenesis; lipopolysaccharide biosynthesis. Catalyzes the transfer of 4-deoxy-4-formamido-L-arabinose from UDP to undecaprenyl phosphate. The modified arabinose is attached to lipid A and is required for resistance to polymyxin and cationic antimicrobial peptides. The polypeptide is Undecaprenyl-phosphate 4-deoxy-4-formamido-L-arabinose transferase (Pseudomonas aeruginosa (strain UCBPP-PA14)).